The chain runs to 610 residues: Atypical kinase COQ8, mitochondrial (610 aa).

Over residues 98–111 the composition is skewed to basic and acidic residues; it reads GVKHLQEQSSKEIK. The segment at 98–144 is disordered; the sequence is GVKHLQEQSSKEIKNPISQPILPNKKDEISPAKPSAIDSSIKDVTKS.

It belongs to the protein kinase superfamily. ADCK protein kinase family.

Its subcellular location is the mitochondrion. It participates in cofactor biosynthesis; ubiquinone biosynthesis. Atypical kinase involved in the biosynthesis of coenzyme Q, also named ubiquinone, an essential lipid-soluble electron transporter for aerobic cellular respiration. Its substrate specificity is still unclear: may act as a protein kinase that mediates phosphorylation of coq3. According to other reports, acts as a small molecule kinase, possibly a lipid kinase that phosphorylates a prenyl lipid in the ubiquinone biosynthesis pathway, as suggested by its ability to bind coenzyme Q lipid intermediates. The sequence is that of Atypical kinase COQ8, mitochondrial from Schizosaccharomyces pombe (strain 972 / ATCC 24843) (Fission yeast).